We begin with the raw amino-acid sequence, 427 residues long: MAILLKNGLVYQEGEFIKEDVLISGSKIQAIGLDLPEEGAEVYDLKGKLLAPGLVDIHEHYREPGFTYKETIKTGSEAASRGGFTTVCTMPNVDPIPDDLETFEKQVALNEANSCVHLKQYGAITEDLTSDKVVDMAALKEAGAFAFSNDGHGIQQAGTMYEAMQEAAKVGLAICEHIQDDSLYHHGVMNAGKKAEELGLPGILGVSESAQLARDLVLAQATGVHYHACHVSTKESVELIRIAKEYGINVTAEATPHHLLLSEEEIDGNNGYYKMNPPLRSKEDQFALIEGMLDGTIDLIATDHAPHSREEKAGDMRKAAFGIIGNETAFACLYTKFVKSGQMDLSLLLDLMSYQPAKLFGLDAGVLAPGKEADLAVFDLDHAEKLSEEDYLSKGVNTPFTGQEVYGMTALTFVSGKLVYKSKHFAD.

Residues H58 and H60 each coordinate Zn(2+). Residues 60–62 and N92 each bind substrate; that span reads HYR. 3 residues coordinate Zn(2+): D150, H177, and H230. N276 serves as a coordination point for substrate. D303 contacts Zn(2+). D303 is a catalytic residue. Residues H307 and 321–322 contribute to the substrate site; that span reads FG.

The protein belongs to the metallo-dependent hydrolases superfamily. DHOase family. Class I DHOase subfamily. It depends on Zn(2+) as a cofactor.

The enzyme catalyses (S)-dihydroorotate + H2O = N-carbamoyl-L-aspartate + H(+). The protein operates within pyrimidine metabolism; UMP biosynthesis via de novo pathway; (S)-dihydroorotate from bicarbonate: step 3/3. Its function is as follows. Catalyzes the reversible cyclization of carbamoyl aspartate to dihydroorotate. This chain is Dihydroorotase, found in Lactobacillus leichmannii.